Reading from the N-terminus, the 565-residue chain is MVLKKGVKFFQRLINSKSLRFGENYEDDDLVNSDEVMKKPCPVQIVLAHEDDHNFELDEEALEQILLQEHIRDLNIVVVSVAGAFRKGKSFLLDFMLRYMYNKDSQSWIGGNNEPLTGFTWRGGCERETTGIQVWNEVFVIDRPNGTKVAVLLMDTQGAFDSQSTIKDCATVFALSTMTSSVQVYNLSQNIQEDDLQHLQLFTEYGRLAMEEIYQKPFQTLMFLIRDWSYPYEHSYGLEGGKQFLEKRLQVKKNQHEELQNVRKHIHNCFSNLGCFLLPHPGLKVATNPSFDGRLKDIDEDFKRELRNLVPLLLAPENLVEKEISGSKVTCRDLVEYFKAYIKIYQGEELPHPKSMLQATAEANNLAAVAGARDTYCKSMEQVCGGDKPYIAPSDLERKHLDLKEVAIKQFRSVKKMGGDEFCRRYQDQLEAEIEETYANFIKHNDGKNIFYAARTPATLFAVMFAMYIISGLTGFIGLNSIAVLCNLVMGLALTFLCTWAYVKYSGEFREIGTMIDQIAETLWEQVLKPLGDNLMEENIRQSVTNSIKAGLTDQVSHHARLKTD.

Topologically, residues 1-458 (MVLKKGVKFF…NIFYAARTPA (458 aa)) are cytoplasmic. Residues 73–318 (DLNIVVVSVA…LVPLLLAPEN (246 aa)) enclose the GB1/RHD3-type G domain. Positions 86, 87, 88, 89, 90, 91, 157, 226, and 227 each coordinate GDP. Positions 86, 87, 88, 89, 90, and 91 each coordinate GTP. Position 90 (Ser-90) interacts with Mg(2+). Arg-226 and Asp-227 together coordinate GTP. A coiled-coil region spans residues 238-266 (LEGGKQFLEKRLQVKKNQHEELQNVRKHI). At Lys-252 the chain carries N6-methyllysine. Positions 285 and 288 each coordinate GDP. Val-285 contacts GTP. Positions 356 to 447 (MLQATAEANN…YANFIKHNDG (92 aa)) are 3HB (three-helix bundle) domain. Residues 448 to 456 (KNIFYAART) are linker. A helical transmembrane segment spans residues 459 to 479 (TLFAVMFAMYIISGLTGFIGL). At 480 to 481 (NS) the chain is on the lumenal side. Residues 482–502 (IAVLCNLVMGLALTFLCTWAY) form a helical membrane-spanning segment. Residues 503 to 565 (VKYSGEFREI…VSHHARLKTD (63 aa)) are Cytoplasmic-facing. The segment at 529 to 565 (KPLGDNLMEENIRQSVTNSIKAGLTDQVSHHARLKTD) is autoinhibitory domain.

The protein belongs to the TRAFAC class dynamin-like GTPase superfamily. GB1/RHD3 GTPase family. GB1 subfamily. In terms of assembly, monomeric and homodimeric. The homodimer, transiently formed by two molecules on opposing membranes, is the active form mediating ER membrane fusion. Interacts with REEP5 and RTN3; these proteins are involved in endoplasmic reticulum tubular network organization. Interacts with ZFYVE27; both proteins are involved in endoplasmic reticulum tubular network organization.

The protein resides in the endoplasmic reticulum membrane. The catalysed reaction is GTP + H2O = GDP + phosphate + H(+). Functionally, atlastin-2 (ATL2) is a membrane-anchored GTPase that mediates the GTP-dependent fusion of endoplasmic reticulum (ER) membranes, maintaining the continuous ER network. It facilitates the formation of three-way junctions where ER tubules intersect. Two atlastin-2 on neighboring ER tubules bind GTP and form loose homodimers through the GB1/RHD3-type G domains and 3HB regions. Upon GTP hydrolysis, the 3HB regions tighten, pulling the membranes together to drive their fusion. After fusion, the homodimer disassembles upon release of inorganic phosphate (Pi). Subsequently, GDP dissociates, resetting the monomers to a conformation ready for a new fusion cycle. This Macaca fascicularis (Crab-eating macaque) protein is Atlastin-2.